The chain runs to 462 residues: Argininosuccinate lyase (462 aa).

This sequence belongs to the lyase 1 family. Argininosuccinate lyase subfamily.

It is found in the cytoplasm. The enzyme catalyses 2-(N(omega)-L-arginino)succinate = fumarate + L-arginine. The protein operates within amino-acid biosynthesis; L-arginine biosynthesis; L-arginine from L-ornithine and carbamoyl phosphate: step 3/3. The polypeptide is Argininosuccinate lyase (Prochlorococcus marinus (strain SARG / CCMP1375 / SS120)).